A 333-amino-acid chain; its full sequence is CMP-N-acetylneuraminate-beta-galactosamide-alpha-2,3-sialyltransferase 4 (333 aa).

Topologically, residues 1–8 are cytoplasmic; it reads MTSKSHWK. A helical; Signal-anchor for type II membrane protein membrane pass occupies residues 9 to 26; that stretch reads LLALALVLVVVMVWYSIS. Residues 27-333 lie on the Lumenal side of the membrane; sequence REDRYIEFFY…MGAVKNLTYF (307 aa). Residues Asn-61, Asn-131, Asn-310, and Asn-329 are each glycosylated (N-linked (GlcNAc...) asparagine). The cysteines at positions 120 and 273 are disulfide-linked.

It belongs to the glycosyltransferase 29 family. Broadly expressed among tissues with highest levels in the small intestine and colon.

The protein localises to the golgi apparatus. The protein resides in the golgi stack membrane. It catalyses the reaction a beta-D-galactosyl-(1-&gt;3)-N-acetyl-beta-D-galactosaminyl derivative + CMP-N-acetyl-beta-neuraminate = an N-acetyl-alpha-neuraminyl-(2-&gt;3)-beta-D-galactosyl-(1-&gt;3)-N-acetyl-beta-D-galactosaminyl derivative + CMP + H(+). The enzyme catalyses a beta-D-galactosyl-(1-&gt;3)-N-acetyl-alpha-D-galactosaminyl derivative + CMP-N-acetyl-beta-neuraminate = an N-acetyl-alpha-neuraminyl-(2-&gt;3)-beta-D-galactosyl-(1-&gt;3)-N-acetyl-alpha-D-galactosaminyl derivative + CMP + H(+). The catalysed reaction is a beta-D-galactosyl-(1-&gt;4)-N-acetyl-beta-D-glucosaminyl derivative + CMP-N-acetyl-beta-neuraminate = an N-acetyl-alpha-neuraminyl-(2-&gt;3)-beta-D-galactosyl-(1-&gt;4)-N-acetyl-beta-D-glucosaminyl derivative + CMP + H(+). It carries out the reaction a ganglioside GM1 (d18:1(4E)) + CMP-N-acetyl-beta-neuraminate = a ganglioside GD1a (d18:1(4E)) + CMP + H(+). It catalyses the reaction a ganglioside GA1 (d18:1(4E)) + CMP-N-acetyl-beta-neuraminate = a ganglioside GM1b (d18:1(4E)) + CMP + H(+). The enzyme catalyses a ganglioside GT1c (d18:1(4E)) + CMP-N-acetyl-beta-neuraminate = a ganglioside GQ1c (d18:1(4E)) + CMP + H(+). The catalysed reaction is a neolactoside nLc4Cer + CMP-N-acetyl-beta-neuraminate = a neolactoside IV(3)-alpha-NeuAc-nLc4Cer + CMP + H(+). It carries out the reaction a neolactoside nLc4Cer(d18:1(4E)) + CMP-N-acetyl-beta-neuraminate = a neolactoside IV(3)-alpha-NeuAc-nLc4Cer(d18:1(4E)) + CMP + H(+). The protein operates within protein modification; protein glycosylation. A beta-galactoside alpha2-3 sialyltransferase involved in terminal sialylation of glycoproteins and glycolipids. Catalyzes the transfer of sialic acid (N-acetyl-neuraminic acid; Neu5Ac) from the nucleotide sugar donor CMP-Neu5Ac onto acceptor Galbeta-(1-&gt;3)-GalNAc- and Galbeta-(1-&gt;4)-GlcNAc-terminated glycoconjugates through an alpha2-3 linkage. Plays a major role in hemostasis. Responsible for sialylation of plasma VWF/von Willebrand factor, preventing its recognition by asialoglycoprotein receptors (ASGPR) and subsequent clearance. Regulates ASGPR-mediated clearance of platelets. Participates in the biosynthesis of the sialyl Lewis X epitopes, both on O- and N-glycans, which are recognized by SELE/E-selectin, SELP/P-selectin and SELL/L-selectin. Essential for selectin-mediated rolling and adhesion of leukocytes during extravasation. Contributes to adhesion and transendothelial migration of neutrophils likely through terminal sialylation of CXCR2. In glycosphingolipid biosynthesis, sialylates GM1 and GA1 gangliosides to form GD1a and GM1b, respectively. Metabolizes brain c-series ganglioside GT1c forming GQ1c. Synthesizes ganglioside LM1 (IV3Neu5Ac-nLc4Cer), a major structural component of peripheral nerve myelin. This is CMP-N-acetylneuraminate-beta-galactosamide-alpha-2,3-sialyltransferase 4 (St3gal4) from Mus musculus (Mouse).